The following is a 241-amino-acid chain: Octanoyltransferase (241 aa).

The BPL/LPL catalytic domain maps to 49–233 (GEASELVWLL…AFGEVFGPSE (185 aa)). Substrate contacts are provided by residues 87–94 (RGGQVTYH), 162–164 (AIG), and 175–177 (GIS). Cys193 acts as the Acyl-thioester intermediate in catalysis.

This sequence belongs to the LipB family.

Its subcellular location is the cytoplasm. The catalysed reaction is octanoyl-[ACP] + L-lysyl-[protein] = N(6)-octanoyl-L-lysyl-[protein] + holo-[ACP] + H(+). It participates in protein modification; protein lipoylation via endogenous pathway; protein N(6)-(lipoyl)lysine from octanoyl-[acyl-carrier-protein]: step 1/2. Functionally, catalyzes the transfer of endogenously produced octanoic acid from octanoyl-acyl-carrier-protein onto the lipoyl domains of lipoate-dependent enzymes. Lipoyl-ACP can also act as a substrate although octanoyl-ACP is likely to be the physiological substrate. This Nitrobacter hamburgensis (strain DSM 10229 / NCIMB 13809 / X14) protein is Octanoyltransferase.